Here is a 507-residue protein sequence, read N- to C-terminus: MATHQQTQPPSDFPALADENSQIPEATKPANEVQQATIAQDPPTSVFKNSEPIREDQIQNAIKFLSHPRVRGSPVIHRRSFLERKGLTKEEIDEAFRRVPDPPPSSQTTVTTSQDGQQAVSTVQPQAMQPVVAAPAPLIVTPQAAFLSRFRWYHAILAVGVLAASGAGTAVFIKRSLIPRFKSWVQRIMLEEETDPLKKADAKPSLAEEAVAAAKAASAAASDVARVSQEMMITKNEERKYFEDLTHLLGVQVQEMKSLSNNIRKLEGQSNNIPKIYSADQEVYNGSVTTARKPYTNGSNVDYDTRSARSASPPAAPADSSAPPHPKSYMDIMSMIQRGEKPSNIREINDMPPNPNQPLSDPRIAPKSKPWDYGQAPQDESSNGQWWQQKNPRSTDFGYETTTAARFTANQNETSTMEPAAFQRQRSWVPPQPPPVAMAEAVEAIRRPKPQAKIDQEAAASDGQSGVSDELQKITKFSESGGDGSGGIKIAEIQEETEQQHISQEGN.

2 stretches are compositionally biased toward polar residues: residues 1-10 and 32-48; these read MATHQQTQPP and EVQQATIAQDPPTSVFK. The segment at 1–52 is disordered; that stretch reads MATHQQTQPPSDFPALADENSQIPEATKPANEVQQATIAQDPPTSVFKNSEP. Topologically, residues 1-152 are peroxisomal; it reads MATHQQTQPP…QAAFLSRFRW (152 aa). 2 involved in interaction with PEX5 regions span residues 58-65 and 78-97; these read IQNAIKFL and RRSFLERKGLTKEEIDEAFR. A helical transmembrane segment spans residues 153–173; the sequence is YHAILAVGVLAASGAGTAVFI. The Cytoplasmic portion of the chain corresponds to 174-507; the sequence is KRSLIPRFKS…EQQHISQEGN (334 aa). Residues 288–302 show a composition bias toward polar residues; that stretch reads VTTARKPYTNGSNVD. Disordered regions lie at residues 288 to 329, 344 to 394, 409 to 435, and 448 to 507; these read VTTA…PKSY, NIRE…NPRS, ANQNETSTMEPAAFQRQRSWVPPQPPP, and PKPQ…QEGN. A compositionally biased stretch (low complexity) spans 308–322; that stretch reads ARSASPPAAPADSSA. Positions 378–394 are enriched in polar residues; that stretch reads QDESSNGQWWQQKNPRS.

The protein belongs to the peroxin-14 family. As to quaternary structure, interacts with PEX13; forming the PEX13-PEX14 docking complex. Interacts with PEX5 (via WxxxF/Y motifs). As to expression, expressed in flowers, siliques, leaves and roots.

Its subcellular location is the peroxisome membrane. Component of the PEX13-PEX14 docking complex, a translocon channel that specifically mediates the import of peroxisomal cargo proteins bound to PEX5 receptor. The PEX13-PEX14 docking complex forms a large import pore which can be opened to a diameter of about 9 nm. Mechanistically, PEX5 receptor along with cargo proteins associates with the PEX14 subunit of the PEX13-PEX14 docking complex in the cytosol, leading to the insertion of the receptor into the organelle membrane with the concomitant translocation of the cargo into the peroxisome matrix. The polypeptide is Peroxisomal membrane protein PEX14 (Arabidopsis thaliana (Mouse-ear cress)).